The chain runs to 506 residues: UDP-glycosyltransferase eriJ (506 aa).

The protein belongs to the UDP-glycosyltransferase family.

The enzyme catalyses 11-O-acetylcyathatriol + UDP-alpha-D-xylose = erinacine Q + UDP + H(+). It carries out the reaction 11-O-acetylcyathatriol + UDP-alpha-D-glucose = erinacine Q2 + UDP + H(+). It participates in secondary metabolite biosynthesis. In terms of biological role, UDP-glycosyltransferase; part of the gene cluster that mediates the biosynthesis of erinacines, cyathane-xylosides that show unique biological activities, including leishmanicidal activity, stimulating activity for nerve growth-factor synthesis, and agonistic activity toward the kappa opioid receptor. Within the pathway, eriJ tranfers xylose from UDP-xylose onto C-14 of 11-O-acetyl-cyathatriol to form eracine Q, and, at a lower rate, glucose from UDP-D-glucose to produce eracine Q2. The first step of the erinacines biosynthesis pathway is catalyzed by the geranylgeranyl diphosphate (GGPP) synthase eriE via conversion of farnesyl pyrophosphate and isopentyl pyrophosphate into geranylgeranyl pyrophosphate (GGPP). GGPP is then substrate of the diterpene cyclase eriG for the production of cyatha-3,12-diene. The cytochrome P450 monooxygenase eriI then hydroxylates cyatha-3,12-diene at C-14 of the seven-membered ring to produce erinacol, which is further hydroxylated at C-15 by the cytochrome P450 monooxygenase eriC to yield cyathadiol. The cytochrome P450 monooxygenase eriA then catalyzes C-11 hydroxylation in the presence of the short chain dehydrogenase/reductase (SDR) eriH, which leads to the production of cyathatriol. The acetyltransferase eriL converts cyathatriol into 11-O-acetyl-cyathatriol. The SDR eriH catalyzes further oxidation of 11-O-acetyl-cyathatriol into 1-O-acetylcyathin A3. Finally, the glycosyl transferase eriJ tranfers xylose from UDP-xylose onto C-14 of 11-O-acetyl-cyathatriol to form eracine Q. EriJ is also able to convert 11-O-acetyl-cyathatriol to eracine Q2 by using UDP-D-glucose as cosubstrate, but at a lower rate. The polypeptide is UDP-glycosyltransferase eriJ (Hericium erinaceus (Lion's mane mushroom)).